The chain runs to 221 residues: Ribonuclease 3 (221 aa).

Positions 4 to 121 (LEQLEKKLGY…LWAAVYIDSG (118 aa)) constitute an RNase III domain. Glu-40 contacts Mg(2+). Asp-44 is an active-site residue. Mg(2+)-binding residues include Asp-107 and Glu-110. Glu-110 is an active-site residue. The DRBM domain occupies 151–219 (DYKTILQEIT…AEELIKLLEE (69 aa)).

Belongs to the ribonuclease III family. As to quaternary structure, homodimer. It depends on Mg(2+) as a cofactor.

The protein localises to the cytoplasm. The catalysed reaction is Endonucleolytic cleavage to 5'-phosphomonoester.. Functionally, digests double-stranded RNA. Involved in the processing of primary rRNA transcript to yield the immediate precursors to the large and small rRNAs (23S and 16S). Also processes some mRNAs, and tRNAs when they are encoded in the rRNA operon. Probably processes pre-crRNA and tracrRNA of type II CRISPR loci if present in the organism. In Aquifex aeolicus (strain VF5), this protein is Ribonuclease 3 (rnc).